The chain runs to 331 residues: Ornithine carbamoyltransferase, catabolic (331 aa).

Carbamoyl phosphate contacts are provided by residues 57 to 60 (STRT), Gln-82, Arg-106, and 133 to 136 (HPTQ). Residues Asn-166, Asp-230, and 234–235 (SM) contribute to the L-ornithine site. Residues 272–273 (CL) and Arg-317 each bind carbamoyl phosphate.

This sequence belongs to the aspartate/ornithine carbamoyltransferase superfamily. OTCase family.

It is found in the cytoplasm. The catalysed reaction is carbamoyl phosphate + L-ornithine = L-citrulline + phosphate + H(+). The protein operates within amino-acid degradation; L-arginine degradation via ADI pathway; carbamoyl phosphate from L-arginine: step 2/2. Reversibly catalyzes the transfer of the carbamoyl group from carbamoyl phosphate (CP) to the N(epsilon) atom of ornithine (ORN) to produce L-citrulline. The polypeptide is Ornithine carbamoyltransferase, catabolic (arcB) (Clostridium perfringens (strain ATCC 13124 / DSM 756 / JCM 1290 / NCIMB 6125 / NCTC 8237 / Type A)).